The chain runs to 118 residues: Protein TusC (118 aa).

This sequence belongs to the DsrF/TusC family. In terms of assembly, heterohexamer, formed by a dimer of trimers. The hexameric TusBCD complex contains 2 copies each of TusB, TusC and TusD. The TusBCD complex interacts with TusE.

It is found in the cytoplasm. In terms of biological role, part of a sulfur-relay system required for 2-thiolation of 5-methylaminomethyl-2-thiouridine (mnm(5)s(2)U) at tRNA wobble positions. The sequence is that of Protein TusC from Salmonella gallinarum (strain 287/91 / NCTC 13346).